The sequence spans 333 residues: MFNLKNRNFLTLMDFTPKEINYFLDLARDLKRAKYTGTEVQRLKGKNIALIFEKASTRTRCAFEVGAKDQGAHVTYLGPTGSHIGKKESAADTARVLGRMYDGIEYRGFGQEIVETLAEYAGVPVWNGLTDEDHPTQILADFLTIREHFNKPLNEIKFAYVGDGANNMANALMIGAVKMGMDFRIVSPKEIPTDAALVAKCKEIAAGTGAKVTITDNIEEGVKGCDVLYTDVWVSMGEPDSVWESKIKLLTPYRVDMNMIKMTGNPDAKFMHCLPAFHDEETAVGKEIKEKYGLSEMEVSHELFESKYSIVFDEAENRMHTIKAVMVATLGDQ.

Carbamoyl phosphate-binding positions include 56-59 (STRT), Arg-107, and 134-137 (HPTQ). Residues Asn-167, Asp-231, and 235–236 (SM) each bind L-ornithine. Residues 273-274 (CL) and Arg-318 each bind carbamoyl phosphate.

It belongs to the aspartate/ornithine carbamoyltransferase superfamily. OTCase family.

The protein localises to the cytoplasm. The catalysed reaction is carbamoyl phosphate + L-ornithine = L-citrulline + phosphate + H(+). Its pathway is amino-acid degradation; L-arginine degradation via ADI pathway; carbamoyl phosphate from L-arginine: step 2/2. Functionally, reversibly catalyzes the transfer of the carbamoyl group from carbamoyl phosphate (CP) to the N(epsilon) atom of ornithine (ORN) to produce L-citrulline. The protein is Ornithine carbamoyltransferase of Clostridium botulinum (strain Kyoto / Type A2).